The chain runs to 549 residues: Dihydroxy-acid dehydratase (549 aa).

Position 78 (aspartate 78) interacts with Mg(2+). A [2Fe-2S] cluster-binding site is contributed by cysteine 119. Mg(2+) contacts are provided by aspartate 120 and lysine 121. Lysine 121 is modified (N6-carboxylysine). Cysteine 191 provides a ligand contact to [2Fe-2S] cluster. Residue glutamate 441 coordinates Mg(2+). Serine 466 serves as the catalytic Proton acceptor.

Belongs to the IlvD/Edd family. In terms of assembly, homodimer. It depends on [2Fe-2S] cluster as a cofactor. Mg(2+) serves as cofactor.

It catalyses the reaction (2R)-2,3-dihydroxy-3-methylbutanoate = 3-methyl-2-oxobutanoate + H2O. The catalysed reaction is (2R,3R)-2,3-dihydroxy-3-methylpentanoate = (S)-3-methyl-2-oxopentanoate + H2O. Its pathway is amino-acid biosynthesis; L-isoleucine biosynthesis; L-isoleucine from 2-oxobutanoate: step 3/4. It functions in the pathway amino-acid biosynthesis; L-valine biosynthesis; L-valine from pyruvate: step 3/4. Its function is as follows. Functions in the biosynthesis of branched-chain amino acids. Catalyzes the dehydration of (2R,3R)-2,3-dihydroxy-3-methylpentanoate (2,3-dihydroxy-3-methylvalerate) into 2-oxo-3-methylpentanoate (2-oxo-3-methylvalerate) and of (2R)-2,3-dihydroxy-3-methylbutanoate (2,3-dihydroxyisovalerate) into 2-oxo-3-methylbutanoate (2-oxoisovalerate), the penultimate precursor to L-isoleucine and L-valine, respectively. This Methanosphaera stadtmanae (strain ATCC 43021 / DSM 3091 / JCM 11832 / MCB-3) protein is Dihydroxy-acid dehydratase.